We begin with the raw amino-acid sequence, 415 residues long: Gamma-glutamyl phosphate reductase (415 aa).

The protein belongs to the gamma-glutamyl phosphate reductase family.

The protein resides in the cytoplasm. It carries out the reaction L-glutamate 5-semialdehyde + phosphate + NADP(+) = L-glutamyl 5-phosphate + NADPH + H(+). It participates in amino-acid biosynthesis; L-proline biosynthesis; L-glutamate 5-semialdehyde from L-glutamate: step 2/2. Catalyzes the NADPH-dependent reduction of L-glutamate 5-phosphate into L-glutamate 5-semialdehyde and phosphate. The product spontaneously undergoes cyclization to form 1-pyrroline-5-carboxylate. The chain is Gamma-glutamyl phosphate reductase from Bacillus subtilis (strain 168).